We begin with the raw amino-acid sequence, 113 residues long: U11-theraphotoxin-Hhn1a (113 aa).

Residues 1 to 21 (MNTVRVTFLLVFVLPVSLGQA) form the signal peptide. The propeptide occupies 22–74 (DKDENRMEMQEKTEQGKSYLDFAENLLLQKLEELEAKLLEEDSEESRNSRQKR). Residues 60-69 (LEEDSEESRN) are compositionally biased toward basic and acidic residues. Residues 60 to 83 (LEEDSEESRNSRQKRCIGEGVPCD) form a disordered region. 3 disulfides stabilise this stretch: Cys-75–Cys-90, Cys-82–Cys-95, and Cys-89–Cys-110.

This sequence belongs to the neurotoxin 14 (magi-1) family. 01 (HNTX-16) subfamily. Expressed by the venom gland.

It localises to the secreted. In terms of biological role, probable ion channel inhibitor. This is U11-theraphotoxin-Hhn1a from Cyriopagopus hainanus (Chinese bird spider).